The primary structure comprises 197 residues: uncharacterized protein (197 aa).

Belongs to the NAD(P)H dehydrogenase (quinone) family.

This is an uncharacterized protein from Bacillus subtilis (strain 168).